Consider the following 81-residue polypeptide: Putative defensin-like protein 25 (81 aa).

The signal sequence occupies residues 1–23 (MASLKVFSFALILVLTFSVDVEG). Disulfide bonds link Cys33–Cys81, Cys43–Cys68, Cys52–Cys77, and Cys56–Cys79.

It belongs to the DEFL family.

The protein localises to the secreted. The polypeptide is Putative defensin-like protein 25 (Arabidopsis thaliana (Mouse-ear cress)).